A 583-amino-acid polypeptide reads, in one-letter code: PTS system lactose-specific EIICB component (583 aa).

Residues Ile8–Phe409 form the PTS EIIC type-3 domain. Helical transmembrane passes span Gly30–Val50, Gly64–Thr84, Ile103–Pro123, Lys137–Ile157, Val176–Leu196, Gly222–His242, Phe283–Leu303, Val339–Val359, and Ile381–Val401. A compositionally biased stretch (low complexity) spans Ala453–Ala462. Positions Ala453–Asn475 are disordered. In terms of domain architecture, PTS EIIB type-3 spans Gln480–Lys583. Residue Cys487 is the Phosphocysteine intermediate; for EIIB activity of the active site. Cys487 is subject to Phosphocysteine; by EIIA.

Its subcellular location is the cell membrane. The catalysed reaction is lactose(out) + N(pros)-phospho-L-histidyl-[protein] = lactose 6-phosphate(in) + L-histidyl-[protein]. The phosphoenolpyruvate-dependent sugar phosphotransferase system (sugar PTS), a major carbohydrate active transport system, catalyzes the phosphorylation of incoming sugar substrates concomitantly with their translocation across the cell membrane. The enzyme II LacEF PTS system is involved in lactose transport. This is PTS system lactose-specific EIICB component from Staphylococcus haemolyticus (strain JCSC1435).